A 551-amino-acid polypeptide reads, in one-letter code: MGNCCRSPAAAAREDVKSSHFPASAGKKKPHQARNGGVGGGGGGGGGGGGGGGAGQKRLPVLGEEGCELIGGIDDKYALDRELGRGEFGVTYLCMDRDTKELLACKSISKRKLRTAVDVEDVRREVAIMRHLPKSASIVSLREACEDEGAVHLVMELCEGGELFDRIVARGHYTERAAANVTRTIVEVVQLCHRHGVIHRDLKPENFLFANKKENSPLKAIDFGLSIFFKPGEKFSEIVGSPYYMAPEVLKRNYGPEIDIWSAGVILYILLCGVPPFWAETEQGVAQAILRGNIDFKREPWPNVSENAKDLVRRMLEPDPKLRLTAKQVLEHPWLQNAKKAPNVPLGDIVKSRLKQFSRMNRFKRRALRVIADHLSAEEVEDIKEMFKAMDTDNDGIVSYEELKSGIAKFGSHLAESEVQMLIEAVDTNGKDALDYGEFLAVSLHLQRMANDEHLRRAFLFFDKDGNGYIEPEELREALVDDGAGDSMEVVNDILQEVDTDKDGKISYDEFVAMMKTGTDWRKASRHYSRGRFNSLSMKLIKDGSVKLVNE.

Positions 1 to 57 (MGNCCRSPAAAAREDVKSSHFPASAGKKKPHQARNGGVGGGGGGGGGGGGGGGAGQK) are disordered. The N-myristoyl glycine moiety is linked to residue G2. Over residues 36-55 (GGVGGGGGGGGGGGGGGGAG) the composition is skewed to gly residues. The region spanning 77–335 (YALDRELGRG…AKQVLEHPWL (259 aa)) is the Protein kinase domain. ATP is bound by residues 83 to 91 (LGRGEFGVT) and K106. D201 (proton acceptor) is an active-site residue. The tract at residues 341–371 (APNVPLGDIVKSRLKQFSRMNRFKRRALRVI) is autoinhibitory domain. EF-hand domains follow at residues 378 to 413 (EEVEDIKEMFKAMDTDNDGIVSYEELKSGIAKFGSH), 414 to 449 (LAESEVQMLIEAVDTNGKDALDYGEFLAVSLHLQRM), 450 to 485 (ANDEHLRRAFLFFDKDGNGYIEPEELREALVDDGAG), and 486 to 521 (DSMEVVNDILQEVDTDKDGKISYDEFVAMMKTGTDW). Residues D391, D393, D395, E402, D427, N429, E438, D463, D465, N467, Y469, E474, D499, D501, D503, K505, and E510 each contribute to the Ca(2+) site.

Belongs to the protein kinase superfamily. Ser/Thr protein kinase family. CDPK subfamily. In terms of tissue distribution, expressed in roots and developing seeds.

It is found in the membrane. It catalyses the reaction L-seryl-[protein] + ATP = O-phospho-L-seryl-[protein] + ADP + H(+). It carries out the reaction L-threonyl-[protein] + ATP = O-phospho-L-threonyl-[protein] + ADP + H(+). Its activity is regulated as follows. Activated by calcium. Autophosphorylation may play an important role in the regulation of the kinase activity. In terms of biological role, may play a role in signal transduction pathways that involve calcium as a second messenger. The polypeptide is Calcium-dependent protein kinase 3 (Oryza sativa subsp. japonica (Rice)).